Here is a 161-residue protein sequence, read N- to C-terminus: MTAALLPRVGIGVDVHPFSPDRPLWLAGLHWPGEPGLAGHSDADVVIHALCNALLSAAGLGDLGTQFGTAEPEWRDAAGTRLLTETVRLVRDAGYAVGNAAVQLLGERPKLRERRTEAEQLLTETVGAPIALSAATTDGLGFLGRRDGLAAVATALVFPAR.

The a divalent metal cation site is built by aspartate 14 and histidine 16. 4-CDP-2-C-methyl-D-erythritol 2-phosphate is bound by residues 14-16 (DVH) and 40-41 (HS). A divalent metal cation is bound at residue histidine 48. 4-CDP-2-C-methyl-D-erythritol 2-phosphate is bound by residues 62–64 (DLG), phenylalanine 142, and arginine 145.

This sequence belongs to the IspF family. In terms of assembly, homotrimer. Requires a divalent metal cation as cofactor.

The catalysed reaction is 4-CDP-2-C-methyl-D-erythritol 2-phosphate = 2-C-methyl-D-erythritol 2,4-cyclic diphosphate + CMP. It participates in isoprenoid biosynthesis; isopentenyl diphosphate biosynthesis via DXP pathway; isopentenyl diphosphate from 1-deoxy-D-xylulose 5-phosphate: step 4/6. Functionally, involved in the biosynthesis of isopentenyl diphosphate (IPP) and dimethylallyl diphosphate (DMAPP), two major building blocks of isoprenoid compounds. Catalyzes the conversion of 4-diphosphocytidyl-2-C-methyl-D-erythritol 2-phosphate (CDP-ME2P) to 2-C-methyl-D-erythritol 2,4-cyclodiphosphate (ME-CPP) with a corresponding release of cytidine 5-monophosphate (CMP). In Acidothermus cellulolyticus (strain ATCC 43068 / DSM 8971 / 11B), this protein is 2-C-methyl-D-erythritol 2,4-cyclodiphosphate synthase.